We begin with the raw amino-acid sequence, 147 residues long: Myoglobin (147 aa).

One can recognise a Globin domain in the interval 2–141; that stretch reads ADFDMVLKCW…IIADMEADYK (140 aa). Residue His60 coordinates nitrite. O2 is bound at residue His60. Position 89 (His89) interacts with heme b.

Belongs to the globin family. As to quaternary structure, monomeric.

Its subcellular location is the cytoplasm. It is found in the sarcoplasm. It catalyses the reaction Fe(III)-heme b-[protein] + nitric oxide + H2O = Fe(II)-heme b-[protein] + nitrite + 2 H(+). The catalysed reaction is H2O2 + AH2 = A + 2 H2O. In terms of biological role, monomeric heme protein which primary function is to store oxygen and facilitate its diffusion within muscle tissues. Reversibly binds oxygen through a pentacoordinated heme iron and enables its timely and efficient release as needed during periods of heightened demand. Depending on the oxidative conditions of tissues and cells, and in addition to its ability to bind oxygen, it also has a nitrite reductase activity whereby it regulates the production of bioactive nitric oxide. Under stress conditions, like hypoxia and anoxia, it also protects cells against reactive oxygen species thanks to its pseudoperoxidase activity. The polypeptide is Myoglobin (mb) (Notothenia neglecta (Yellowbelly rockcod)).